The chain runs to 410 residues: 2-oxoisovalerate dehydrogenase subunit alpha (410 aa).

The protein belongs to the BCKDHA family. Heterodimer of an alpha and a beta chain. Requires thiamine diphosphate as cofactor.

It catalyses the reaction N(6)-[(R)-lipoyl]-L-lysyl-[protein] + 3-methyl-2-oxobutanoate + H(+) = N(6)-[(R)-S(8)-2-methylpropanoyldihydrolipoyl]-L-lysyl-[protein] + CO2. The branched-chain alpha-keto dehydrogenase complex catalyzes the overall conversion of alpha-keto acids to acyl-CoA and CO(2). It contains multiple copies of three enzymatic components: branched-chain alpha-keto acid decarboxylase (E1), lipoamide acyltransferase (E2) and lipoamide dehydrogenase (E3). The chain is 2-oxoisovalerate dehydrogenase subunit alpha (bkdA1) from Pseudomonas aeruginosa (strain ATCC 15692 / DSM 22644 / CIP 104116 / JCM 14847 / LMG 12228 / 1C / PRS 101 / PAO1).